A 563-amino-acid polypeptide reads, in one-letter code: MLTVDDVLEQVGEFGWFQKQTFLILCLLSAAFAPIYVGIVFLAFTPDHRCRSPGVAELSRRCGWSLAEELNYTVPGPGPESQCLRYEVDWNQSTLGCLDPLASLATNGSPLPLGPCEQGWVYDTPGSSIVTEFNLVCDDSWKVDLFQSCVNLGFFLGSLGVGYIADRFGRKVCLLATTLTCASLGVLTAVAPDYTSLLIFRLLQGLVSKGSWTAGYTLITEFVGLGYRRTVAILYQMAFTVGLVLLSGLAYILPHWRWLQLAVSLPIFLLLFRFWFVPESPRWLLSQKRNTEAIKIMDHIAQKNGKLPPADLKMLSLEEDVTEKLSPSFIDLFRTPNLRKYTFILMYLWFTSSVVYQGLIMHVGATGGNLYLDFLYSALVEFPAGFIILVTIDRFGRRYPLATSNLAAGLACFLMIFIPHDLPWLNIMVACVGRMGITIVFQMVCLVNAELFPTFIRNLGMMVCSSLCDLGGVLTPFLVFRLMEVWQGSPLILFAALGLVAGGMTLLLPETKGVTLPETIEDAENLQRKAKPKENKIYLQVQTSELNTQAAERDASQGTAQQK.

Residues 1–21 (MLTVDDVLEQVGEFGWFQKQT) are Cytoplasmic-facing. The chain crosses the membrane as a helical span at residues 22-42 (FLILCLLSAAFAPIYVGIVFL). Topologically, residues 43–144 (AFTPDHRCRS…LVCDDSWKVD (102 aa)) are extracellular. N-linked (GlcNAc...) asparagine glycosylation occurs at Asn-71. Residues 145-165 (LFQSCVNLGFFLGSLGVGYIA) traverse the membrane as a helical segment. The Cytoplasmic portion of the chain corresponds to 166–171 (DRFGRK). Residues 172 to 192 (VCLLATTLTCASLGVLTAVAP) form a helical membrane-spanning segment. The Extracellular portion of the chain corresponds to 193–196 (DYTS). A helical membrane pass occupies residues 197–219 (LLIFRLLQGLVSKGSWTAGYTLI). The Cytoplasmic segment spans residues 220–232 (TEFVGLGYRRTVA). Residues 233–253 (ILYQMAFTVGLVLLSGLAYIL) traverse the membrane as a helical segment. Over 254 to 257 (PHWR) the chain is Extracellular. Residues 258 to 278 (WLQLAVSLPIFLLLFRFWFVP) traverse the membrane as a helical segment. The short motif at 278–282 (PESPR) is the Proline-rich sequence element. At 279–342 (ESPRWLLSQK…FRTPNLRKYT (64 aa)) the chain is on the cytoplasmic side. Residue Ser-328 is modified to Phosphoserine. Residues 343–363 (FILMYLWFTSSVVYQGLIMHV) form a helical membrane-spanning segment. The Extracellular portion of the chain corresponds to 364–371 (GATGGNLY). A helical transmembrane segment spans residues 372 to 392 (LDFLYSALVEFPAGFIILVTI). The Cytoplasmic segment spans residues 393-398 (DRFGRR). The chain crosses the membrane as a helical span at residues 399 to 418 (YPLATSNLAAGLACFLMIFI). Topologically, residues 419 to 423 (PHDLP) are extracellular. A helical transmembrane segment spans residues 424-446 (WLNIMVACVGRMGITIVFQMVCL). Residues 447 to 459 (VNAELFPTFIRNL) lie on the Cytoplasmic side of the membrane. A helical transmembrane segment spans residues 460 to 480 (GMMVCSSLCDLGGVLTPFLVF). Residues 481 to 487 (RLMEVWQ) are Extracellular-facing. The helical transmembrane segment at 488 to 508 (GSPLILFAALGLVAGGMTLLL) threads the bilayer. At 509-563 (PETKGVTLPETIEDAENLQRKAKPKENKIYLQVQTSELNTQAAERDASQGTAQQK) the chain is on the cytoplasmic side.

Belongs to the major facilitator (TC 2.A.1) superfamily. Organic cation transporter (TC 2.A.1.19) family. Post-translationally, phosphorylated.

The protein localises to the basolateral cell membrane. The protein resides in the apical cell membrane. It is found in the lateral cell membrane. It localises to the basal cell membrane. Its subcellular location is the cell membrane. It carries out the reaction 1-methylnicotinamide(out) = 1-methylnicotinamide(in). It catalyses the reaction dopamine(out) = dopamine(in). The catalysed reaction is serotonin(out) = serotonin(in). The enzyme catalyses (R)-adrenaline(out) = (R)-adrenaline(in). It carries out the reaction (R)-noradrenaline(out) = (R)-noradrenaline(in). It catalyses the reaction histamine(out) = histamine(in). The catalysed reaction is guanidine(out) = guanidine(in). The enzyme catalyses choline(out) = choline(in). It carries out the reaction acetylcholine(in) = acetylcholine(out). It catalyses the reaction thiamine(in) = thiamine(out). The catalysed reaction is spermidine(in) = spermidine(out). The enzyme catalyses agmatine(out) = agmatine(in). It carries out the reaction putrescine(out) = putrescine(in). It catalyses the reaction (R)-carnitine(in) = (R)-carnitine(out). The catalysed reaction is O-isobutanoyl-(R)-carnitine(in) = O-isobutanoyl-(R)-carnitine(out). The enzyme catalyses O-acetyl-(R)-carnitine(in) = O-acetyl-(R)-carnitine(out). It carries out the reaction O-3-hydroxybutanoyl-(R)-carnitine(in) = O-3-hydroxybutanoyl-(R)-carnitine(out). It catalyses the reaction O-propanoyl-(R)-carnitine(in) = O-propanoyl-(R)-carnitine(out). The catalysed reaction is O-butanoyl-(R)-carnitine(in) = O-butanoyl-(R)-carnitine(out). The enzyme catalyses O-2-methylbutanoyl-(R)-carnitine(in) = O-2-methylbutanoyl-(R)-carnitine(out). It carries out the reaction O-3-methylbutanoyl-(R)-carnitine(in) = O-3-methylbutanoyl-(R)-carnitine(out). It catalyses the reaction O-hexanoyl-(R)-carnitine(in) = O-hexanoyl-(R)-carnitine(out). The catalysed reaction is L-histidyl-L-proline diketopiperazine(in) = L-histidyl-L-proline diketopiperazine(out). The enzyme catalyses (R)-salsolinol(in) = (R)-salsolinol(out). It carries out the reaction prostaglandin F2alpha(out) = prostaglandin F2alpha(in). It catalyses the reaction prostaglandin E2(out) = prostaglandin E2(in). Its activity is regulated as follows. Phosphorylation of the transporter leads to changes in its substrate affinity, resulting in a regulation of the transport activity. In contrast with rat ortholog, ASP uptake is inhibited by protein kinase A (PKA) and C (PKC) activation. ASP uptake is also endogenously activated by calmodulin, the calmodulin-dependent kinase II and LCK tyrosine kinase. Inhibited by cGMP, most likely through a cGMP-binding protein that interacts with OCT1. Functionally, electrogenic voltage-dependent transporter that mediates the transport of a variety of organic cations such as endogenous bioactive amines, cationic drugs and xenobiotics. Functions as a pH- and Na(+)-independent, bidirectional transporter. Cation cellular uptake or release is driven by the electrochemical potential (i.e. membrane potential and concentration gradient) and substrate selectivity. Hydrophobicity is a major requirement for recognition in polyvalent substrates and inhibitors. Primarily expressed in the basolateral membrane of hepatocytes and proximal tubules and involved in the uptake and disposition of cationic compounds from the blood by hepatic and renal clearance. Most likely functions as an uptake carrier in enterocytes contributing to the intestinal elimination of organic cations from the systemic circulation. Transports endogenous monoamines such as N-1-methylnicotinamide (NMN), guanidine, neurotransmitters dopamine, serotonin, noradrenaline, adrenaline and histamine, and quaternary ammonium compound such as choline. Also transports natural polyamines such as spermidine, agmatine and putrescine at low affinity, but relatively high turnover. Involved in the hepatic and intestinal uptake of the vitamin B1/thiamine, hence regulating hepatic lipid and energy metabolism. Contributes to the influx and efflux of fatty acid carriers carnitines and acylcarnitines across the basolateral membrane of hepatocytes, from the liver to the systemic circulation and inversely and may be involved in regulating the systemic availability of hepatic acylcarnitines. Also capable of transporting non-amine endogenous compounds such as prostaglandin E2 (PGE2) and prostaglandin F2-alpha (PGF2-alpha). May contribute to the transport of cationic compounds in testes across the blood-testis-barrier. Also mediates the uptake of xenobiotics tributylmethylammonium (TBuMA), quinidine, N-methyl-quinine (NMQ), N-methyl-quinidine (NMQD) N-(4,4-azo-n-pentyl)-quinuclidine (APQ), azidoprocainamide methoiodide (AMP), N-(4,4-azo-n-pentyl)-21-deoxyajmalinium (APDA) and 4-(4-(dimethylamino)styryl)-N-methylpyridinium (ASP). The chain is Solute carrier family 22 member 1 (SLC22A1) from Bos taurus (Bovine).